A 788-amino-acid polypeptide reads, in one-letter code: Protein TRS1 (788 aa).

Disordered stretches follow at residues 1 to 82 (MAQR…NFWH) and 610 to 663 (IHKK…PSRV). Residues 16-25 (RGRGAGGPSG) show a composition bias toward gly residues. Residues 26–56 (VGSSPPSSCVPMGATSTAGTGASAAPTATPG) show a composition bias toward low complexity. The tract at residues 74–248 (SGNNSNFWHG…HGAGEVVRLY (175 aa)) is RNA-binding. The span at 651–660 (LRRDDEDWKP) shows a compositional bias: basic and acidic residues. The interaction with host EIF2AK2/PKR stretch occupies residues 672–788 (LDETFWVLGS…NVATHYHYNA (117 aa)).

The protein belongs to the herpesviridae US22 family. As to quaternary structure, interacts with host EIF2AK2/PKR; this interaction retains EIF2AK2 to the host nucleus and prevents its activation. Interaction (via N-terminus) with host BECN1; this interaction inhibits host autophagy. Interacts with the viral DNA polymerase accessory subunit UL44. Interacts with host HSPA5.

The protein localises to the virion. Its subcellular location is the host cytoplasm. The protein resides in the host nucleus. Functionally, inhibits the establishment of the antiviral state in the infected cell. Prevents the phosphorylation of the host eukaryotic translation initiation factor eIF-2alpha/EIF2S1 and thus the shutoff of viral and cellular protein synthesis by directly interacting with EIF2AK2/PKR. Prevents stress granule formation in response to eIF-2alpha/EIF2S1 phosphorylation, thereby rescuing viral replication and protein synthesis. Also inhibits host autophagy by interacting with host Beclin-1/BECN1. The polypeptide is Protein TRS1 (TRS1) (Human cytomegalovirus (strain Merlin) (HHV-5)).